The following is a 393-amino-acid chain: Protein TsgA (393 aa).

A run of 12 helical transmembrane segments spans residues 11–31 (WISF…GMVM), 51–71 (FLNA…EIIP), 78–98 (FGFI…SLAL), 101–121 (AAMF…TFLI), 134–154 (LLFT…VAAF), 162–182 (WYWV…LTFG), 206–226 (IGVL…LGFI), 245–265 (ALVS…SFIL), 273–293 (ILTV…TGTQ), 298–318 (WFIL…ITLG), 332–352 (FILT…GPIV), and 361–381 (LLTA…LGFV).

It belongs to the major facilitator superfamily. TsgA family.

It is found in the cell inner membrane. The polypeptide is Protein TsgA (Salmonella schwarzengrund (strain CVM19633)).